Consider the following 345-residue polypeptide: Protoheme IX farnesyltransferase (345 aa).

9 helical membrane passes run 33-53 (VMSL…TPIH), 54-74 (PLLG…SGAL), 105-125 (ATLG…AINW), 126-146 (LAAG…TMWL), 154-174 (IVIG…AATG), 182-202 (LMVL…SLYI), 226-246 (QILL…FTGL), 247-267 (GGWL…TLAV), and 315-335 (ILYL…GLPI).

The protein belongs to the UbiA prenyltransferase family. Protoheme IX farnesyltransferase subfamily.

Its subcellular location is the cell inner membrane. The catalysed reaction is heme b + (2E,6E)-farnesyl diphosphate + H2O = Fe(II)-heme o + diphosphate. It participates in porphyrin-containing compound metabolism; heme O biosynthesis; heme O from protoheme: step 1/1. Its function is as follows. Converts heme B (protoheme IX) to heme O by substitution of the vinyl group on carbon 2 of heme B porphyrin ring with a hydroxyethyl farnesyl side group. The polypeptide is Protoheme IX farnesyltransferase (Caulobacter sp. (strain K31)).